A 556-amino-acid chain; its full sequence is MASRRVLSSLLRSSSGRSAAKLVNRNPRLPSPSPARHAAPCSYLLGRVAEYATSSPASSAAPSSAPAKDEGKKTYDYGGKGAIGRVCQVIGAIVDVRFEDQEGLPPIMTSLEVQDHPTRLVLEVSHHLGQNVVRTIAMDGTEGLVRGRKVLNTGAPITVPVGRATLGRIMNVLGEPIDERGEIKTEHYLPIHRDAPALVDLATGQEILATGIKVVDLLAPYQRGGKIGLFGGAGVGKTVLIMELINNVAKAHGGFSVFAGVGERTREGNDLYREMIESGVIKLGEKQSESKCALVYGQMNEPPGARARVGLTGLTVAEYFRDAEGQDVLLFIDNIFRFTQANSEVSALLGRIPSAVGYQPTLASDLGALQERITTTKKGSITSVQAIYVPADDLTDPAPATTFAHLDATTVLSRQISELGIYPAVDPLDSTSRMLSPHILGEEHYNTARGVQKVLQNYKNLQDIIAILGMDELSEDDKLTVARARKIQRFLSQPFHVAEIFTGAPGKYVDLKENINSFQGLLDGKYDDLSEQSFYMVGGIDEVVAKAEKIAKESAA.

Positions M1 to A20 are enriched in low complexity. Residues M1–H37 are disordered. A mitochondrion-targeting transit peptide spans M1–Y51. S59 carries the phosphoserine modification. G231 to T238 contributes to the ATP binding site.

The protein belongs to the ATPase alpha/beta chains family. F-type ATPases have 2 components, CF(1) - the catalytic core - and CF(0) - the membrane proton channel. CF(1) has five subunits: alpha(3), beta(3), gamma(1), delta(1), epsilon(1). CF(0) has three main subunits: a, b and c.

Its subcellular location is the mitochondrion. The protein resides in the mitochondrion inner membrane. It carries out the reaction ATP + H2O + 4 H(+)(in) = ADP + phosphate + 5 H(+)(out). Mitochondrial membrane ATP synthase (F(1)F(0) ATP synthase or Complex V) produces ATP from ADP in the presence of a proton gradient across the membrane which is generated by electron transport complexes of the respiratory chain. F-type ATPases consist of two structural domains, F(1) - containing the extramembraneous catalytic core, and F(0) - containing the membrane proton channel, linked together by a central stalk and a peripheral stalk. During catalysis, ATP synthesis in the catalytic domain of F(1) is coupled via a rotary mechanism of the central stalk subunits to proton translocation. Subunits alpha and beta form the catalytic core in F(1). Rotation of the central stalk against the surrounding alpha(3)beta(3) subunits leads to hydrolysis of ATP in three separate catalytic sites on the beta subunits. This Arabidopsis thaliana (Mouse-ear cress) protein is ATP synthase subunit beta-2, mitochondrial.